A 138-amino-acid polypeptide reads, in one-letter code: Basic phospholipase A2 homolog MjTX-I (138 aa).

The first 16 residues, 1–16, serve as a signal peptide directing secretion; it reads MRTLWIMAVLLVGVEG. Residue Val34 participates in suramin binding. Disulfide bonds link Cys42–Cys132, Cys44–Cys60, Cys59–Cys111, Cys65–Cys138, Cys66–Cys104, Cys73–Cys97, and Cys91–Cys102. A varespladib-binding site is contributed by Asn43. Residues Gly45 and Gly48 each contribute to the suramin site. Varespladib is bound by residues His63 and Lys64. Lys85 serves as a coordination point for suramin.

The protein belongs to the phospholipase A2 family. Group II subfamily. K49 sub-subfamily. Monomer in solution. Homodimer; non-covalently linked (probable conventional/extended dimer conformation). Homotetramer (dimer of homodimer (probable conventional/extended dimer conformation)); non-covalently linked. Homooligomer. Expressed by the venom gland.

The protein resides in the secreted. Its activity is regulated as follows. Myotoxin activity is inhibited by suramin and varespladib. Inhibition by suramin may be caused by (i) distortion of MDiS from both monomers impairing the membrane disruption mechanism by the toxin and (ii) surface electrostatic changes of the complex that interfere with the toxin membrane dockage process (putative-MDoS is partially hidden). Inhibition by varespladib is probably through varespladib binding to MDoS. Its function is as follows. Snake venom phospholipase A2 homolog that lacks enzymatic activity. In vivo, it displays local myotoxin and edema-inducing activities and is lethal by intraperitoneal injection. The myotoxicity effect is weaker in comparison to other myotoxins, probably due to the formation of high molecular weight complexes and to the oligomeric conformation (conventional dimer). It shows specificity toward neurons and myotubes, but not on a variety of other cell types. This PLA2 excites a cohort of sensory neurons via ATP release and consequent activation of P2RX2 and/or P2RX3 purinergic receptors. Pannexin hemichannels act as downstream mediators of toxin-evoked ATP release. In vivo, it elicits nonneurogenic inflammatory pain, thermal hyperalgesia, and mechanical allodynia, of which the latter is completely dependent on purinergic signaling. The sequence is that of Basic phospholipase A2 homolog MjTX-I from Bothrops moojeni (Lance-headed viper).